A 508-amino-acid chain; its full sequence is MTEPTQPQAAVAADENQIVAERRGKLRALRDQGIAYPNDFQPTHHAAGLQTEYADADKEALDAKALDVAVAGRMMLKRVMGKASFATVQDGSGQIQFFVTPADVGAETYDAFKKWDLGDIVAARGVLFRTNKGELSVKCTELRLLAKALRPLPDKFHGLADQETRYRQRYVDLIVTPETRATFRARTKAIASIRKFMSDADFMEVETPMLHPIPGGAAAKPFVTHHNALDMQMFLRIAPELYLKRLIVGGFERVFEINRNFRNEGVSPRHNPEFTMMEFYAAYTDYRWLMDFTERLIRQAAVDALGTATIRYQGRELDLAKPFHRLTITQAIQKYAPNYTDGQLSDDAFLRGELKRLGVDVTQPAFLNAGIGALQLALFEETAEAQLWEPTFIIDYPIEVSPLARESDTVAGITERFELFVTGREIANGFSELNDPEDQAARFRKQVEQKDAGDEEAMFFDADYIRALEYGMPPTGGCGIGIDRLVMLLTDSPTIRDVLLFPHLRRED.

2 residues coordinate Mg(2+): Glu418 and Glu425.

The protein belongs to the class-II aminoacyl-tRNA synthetase family. In terms of assembly, homodimer. The cofactor is Mg(2+).

The protein localises to the cytoplasm. It catalyses the reaction tRNA(Lys) + L-lysine + ATP = L-lysyl-tRNA(Lys) + AMP + diphosphate. The sequence is that of Lysine--tRNA ligase from Burkholderia pseudomallei (strain K96243).